A 375-amino-acid polypeptide reads, in one-letter code: Succinyl-diaminopimelate desuccinylase (375 aa).

His-66 lines the Zn(2+) pocket. Asp-68 is an active-site residue. A Zn(2+)-binding site is contributed by Asp-99. The active-site Proton acceptor is the Glu-133. Residues Glu-134, Glu-162, and His-348 each coordinate Zn(2+).

Belongs to the peptidase M20A family. DapE subfamily. Homodimer. The cofactor is Zn(2+). Requires Co(2+) as cofactor.

It carries out the reaction N-succinyl-(2S,6S)-2,6-diaminopimelate + H2O = (2S,6S)-2,6-diaminopimelate + succinate. Its pathway is amino-acid biosynthesis; L-lysine biosynthesis via DAP pathway; LL-2,6-diaminopimelate from (S)-tetrahydrodipicolinate (succinylase route): step 3/3. Catalyzes the hydrolysis of N-succinyl-L,L-diaminopimelic acid (SDAP), forming succinate and LL-2,6-diaminopimelate (DAP), an intermediate involved in the bacterial biosynthesis of lysine and meso-diaminopimelic acid, an essential component of bacterial cell walls. The polypeptide is Succinyl-diaminopimelate desuccinylase (Salmonella choleraesuis (strain SC-B67)).